The sequence spans 1088 residues: uncharacterized protein (1088 aa).

Ser-299 is subject to Phosphoserine. Residues 954–980 form a disordered region; the sequence is PRSSVATTASTESSEQGPKMKRMARRK. A compositionally biased stretch (low complexity) spans 956–968; that stretch reads SSVATTASTESSE. Ser-984 is modified (phosphoserine). Thr-1013 bears the Phosphothreonine mark. The segment at 1063-1088 is disordered; it reads MKVTDKAKDEDIDPMDPMSPLNKDVS. A Phosphoserine modification is found at Ser-1081.

This is an uncharacterized protein from Saccharomyces cerevisiae (strain ATCC 204508 / S288c) (Baker's yeast).